Reading from the N-terminus, the 375-residue chain is 23S rRNA (uracil(747)-C(5))-methyltransferase RlmC (375 aa).

Positions 3, 11, 14, and 87 each coordinate [4Fe-4S] cluster. S-adenosyl-L-methionine is bound by residues Gln-212, Phe-241, Glu-262, and Asn-307. Residue Cys-334 is the Nucleophile of the active site.

This sequence belongs to the class I-like SAM-binding methyltransferase superfamily. RNA M5U methyltransferase family. RlmC subfamily.

It catalyses the reaction uridine(747) in 23S rRNA + S-adenosyl-L-methionine = 5-methyluridine(747) in 23S rRNA + S-adenosyl-L-homocysteine + H(+). Catalyzes the formation of 5-methyl-uridine at position 747 (m5U747) in 23S rRNA. This is 23S rRNA (uracil(747)-C(5))-methyltransferase RlmC from Salmonella dublin (strain CT_02021853).